Here is a 637-residue protein sequence, read N- to C-terminus: DEAD-box ATP-dependent RNA helicase 37 (637 aa).

2 disordered regions span residues 1–68 and 86–141; these read MRSS…QPSA and GPAS…EEAT. 2 stretches are compositionally biased toward low complexity: residues 10–28 and 46–68; these read ANAE…PVAN and GQAP…QPSA. Gly residues predominate over residues 104 to 116; that stretch reads GGRGGGGGGGGGW. The Q motif motif lies at 174–202; it reads NTFAEIDLGDALNENIRRCKYVKPTPVQR. The region spanning 205-389 is the Helicase ATP-binding domain; sequence IPISIAGRDL…SDFLADYIFL (185 aa). 218–225 is an ATP binding site; that stretch reads AQTGSGKT. A DEAD box motif is present at residues 333–336; that stretch reads DEAD. One can recognise a Helicase C-terminal domain in the interval 416-567; sequence YLMDLLHAQK…EVPQWLERYS (152 aa). The segment at 570–610 is disordered; the sequence is SSFGGGGGRNRRSGGARFGGRDFRRDNRGGGGGGYGGGGGG. Basic and acidic residues predominate over residues 588-597; that stretch reads GGRDFRRDNR. Residues 598 to 610 show a composition bias toward gly residues; that stretch reads GGGGGGYGGGGGG.

Belongs to the DEAD box helicase family. DDX3/DED1 subfamily.

The enzyme catalyses ATP + H2O = ADP + phosphate + H(+). This chain is DEAD-box ATP-dependent RNA helicase 37 (PL10A), found in Oryza sativa subsp. japonica (Rice).